A 906-amino-acid polypeptide reads, in one-letter code: Transmembrane channel-like protein 2 (906 aa).

Residues 1–150 form a disordered region; that stretch reads MSHQVKGLKE…SASGGESLSE (150 aa). The Cytoplasmic segment spans residues 1-263; the sequence is MSHQVKGLKE…IFLRWMYGVN (263 aa). Residues 69 to 79 show a composition bias toward basic residues; the sequence is PRRKQTGRRRH. Over residues 80–127 the composition is skewed to basic and acidic residues; that stretch reads REELGEQERGEAERTCEGRRKRDERASFQERTAAPKREKEIPRREEKS. The segment covering 135-147 has biased composition (low complexity); sequence SSSLASSASGGES. A helical membrane pass occupies residues 264 to 284; it reads LVLFGLIFGLVIIPEVLMGMP. Residues 285-336 are Extracellular-facing; the sequence is YGSIPRKTVPRAEEEKAMDFSVLWDFEGYIKYSALFYGYYNNQRTIGWLRYR. The helical transmembrane segment at 337–357 threads the bilayer; the sequence is LPMAYFMVGVSVFGYSLIIVI. At 358–431 the chain is on the cytoplasmic side; sequence RSMASNTQGS…NIHLTRFLRV (74 aa). Residues 432-452 form a helical membrane-spanning segment; that stretch reads LANFLIICCLCGSGYLIYFVV. At 453-508 the chain is on the extracellular side; it reads KRSQQFSKMQNVSWYERNEVEIVMSLLGMFCPPLFETIAALENYHPRTGLKWQLGR. Residues 509-529 traverse the membrane as a helical segment; the sequence is IFALFLGNLYTFLLALMDDVH. The Cytoplasmic portion of the chain corresponds to 530–693; sequence LKLANEETIK…RVFKASRSNN (164 aa). A helical membrane pass occupies residues 694–714; that stretch reads FYMGLLLLVLFLSLLPVAYTI. Residues 715 to 750 lie on the Extracellular side of the membrane; sequence MSLPPSFDCGPFSGKNRMYDVLQETIENDFPTFLGK. Residues 751–771 traverse the membrane as a helical segment; the sequence is IFAFLANPGLIIPAILLMFLA. At 772 to 906 the chain is on the cytoplasmic side; the sequence is IYYLNSVSKS…SGKSAQRPPH (135 aa). The interval 800–906 is disordered; the sequence is EKSHKSVKGK…SGKSAQRPPH (107 aa). Polar residues-rich tracts occupy residues 820–846, 854–866, and 886–900; these read KSSS…QSQA, PGTS…TTLP, and APSQ…SGKS.

It belongs to the TMC family. Forms the MET channel composed of TMC dimer (TMC1 or TMC2), TMIE, TOMT, CIB (CIB2 or CIB3), LHFPL5 and PDH15. The interaction of TMC1 and TMC2 with TOMT is required for the transportation of TMC1/2 into the stereocilia of hair cells. Interacts (via N-terminus) with both isoforms CD1 and CD3 of PCDH15. Can form a heterodimer with TMC1, TMC5 or TMC7. As to expression, detected in fetal cochlea.

It localises to the cell membrane. The catalysed reaction is Ca(2+)(in) = Ca(2+)(out). Functionally, pore-forming subunit of the mechanotransducer (MET) non-selective cation channel complex located at the tips of stereocilia of cochlear hair cells and that mediates sensory transduction in the auditory system. The MET complex is composed of two dimeric pore-forming ion-conducting transmembrane TMC (TMC1 or TMC2) subunits, and aided by several auxiliary proteins including LHFPL5, TMIE, CIB2/3 and TOMT, and the tip-link PCDH15. MET channel is activated by tension in the tip-link extending from the side wall of one stereocilium to the tip of the adjacent shorter stereocilium, where the channel is located. TMC2 MET channel is highly permeable to calcium and likely transports monovalent cations. Also involved in vestibular hair cell transduction current of the mammalian inner ear. This chain is Transmembrane channel-like protein 2, found in Homo sapiens (Human).